Consider the following 359-residue polypeptide: MEQQNKRGLKRKALLGGVLGSGGLAMAGCEVSPPGGMIGDFLRMGWPSGITPEAVSMGNFWSWVWVAAWIIGIIMWGLMLTAIFSWNAKKAEKRGEGEFPKQLQYNVPLELVLTIVPIIIVMVLFFFTVQTQDRVTALDKNPEVTVNVTAYQWNWKFGYGELAPEFAPAGGDYDGVDEARQASAEASKIDPSGNNPIHGNSKKDMSYLHFNQIETLGTTDEVPVLVLPTNTPIEFNLASADVAHSFWVPEFLFKRDLYAHPEANKSQRVFQIDEIFEEGAFVGRCAEMCGTYHAMMNFELRTVDRETFAEYIAFRDANPDATNAQALEHIGEAPYATSTAPFVSDRTGTRDGENFQTPA.

Residues 1–28 (MEQQNKRGLKRKALLGGVLGSGGLAMAG) form the signal peptide. Cysteine 29 carries N-palmitoyl cysteine lipidation. Cysteine 29 is lipidated: S-diacylglycerol cysteine. 2 consecutive transmembrane segments (helical) span residues 64 to 84 (VWVAAWIIGIIMWGLMLTAIF) and 107 to 127 (VPLELVLTIVPIIIVMVLFFF). Positions 244, 285, 287, 289, 293, and 296 each coordinate Cu cation. The segment at 338–359 (STAPFVSDRTGTRDGENFQTPA) is disordered.

This sequence belongs to the cytochrome c oxidase subunit 2 family. In terms of assembly, associates with subunits I, III and IV to form cytochrome c oxidase. The cofactor is binuclear copper center (CuA).

Its subcellular location is the cell membrane. It catalyses the reaction 4 Fe(II)-[cytochrome c] + O2 + 8 H(+)(in) = 4 Fe(III)-[cytochrome c] + 2 H2O + 4 H(+)(out). In terms of biological role, subunits I and II form the functional core of the enzyme complex. Electrons originating in cytochrome c are transferred via heme a and Cu(A) to the binuclear center formed by heme a3 and Cu(B). The protein is Cytochrome c oxidase subunit 2 (ctaC) of Corynebacterium efficiens (strain DSM 44549 / YS-314 / AJ 12310 / JCM 11189 / NBRC 100395).